We begin with the raw amino-acid sequence, 1081 residues long: MESAGLEQLLRELLLPDTERIRRATEQLQIVLRAPAALPALCDLLASAADPQIRQFAAVLTRRRLNTRWRRLAAEQRESLKSLILTALQRETEHCVSLSLAQLSATIFRKEGLEAWPQLLQLLQHSTHSPHSPEREMGLLLLSVVVTSRPEAFQPHHRELLRLLNETLGEVGSPGLLFYSLRTLTTMAPYLSTEDVPLARMLVPKLIMAMQTLIPIDEAKACEALEALDELLESEVPVITPYLSEVLTFCLEVARNVALGNAIRIRILCCLTFLVKVKSKALLKNRLLPPLLHTLFPIVAAEPPPGQLDPEDQDSEEEELEIELMGETPKHFAVQVVDMLALHLPPEKLCPQLMPMLEEALRSESPYQRKAGLLVLAVLSDGAGDHIRQRLLPPLLQIVCKGLEDPSQVVRNAALFALGQFSENLQPHISSYSREVMPLLLAYLKSVPLGHTHHLAKACYALENFVENLGPKVQPYLPELMECMLQLLRNPSSPRAKELAVSALGAIATAAQASLLPYFPAIMEHLREFLLTGREDLQPVQIQSLETLGVLARAVGEPMRPLAEECCQLGLGLCDQVDDPDLRRCTYSLFAALSGLMGEGLAPHLEQITTLMLLSLRSTEGIVPQYDGSSSFLLFDDESDGEEEEELMDEDVEEEDDSEISGYSVENAFFDEKEDTCAAVGEISVNTSVAFLPYMESVFEEVFKLLECPHLNVRKAAHEALGQFCCALHKACQSCPSEPNTAALQAALARVVPSYMQAVNRERERQVVMAVLEALTGVLRSCGTLTLKPPGRLAELCGVLKAVLQRKTACQDTDEEEEEEDDDQAEYDAMLLEHAGEAIPALAAAAGGDSFAPFFAGFLPLLVCKTKQGCTVAEKSFAVGTLAETIQGLGAASAQFVSRLLPVLLSTAQEADPEVRSNAIFGMGVLAEHGGHPAQEHFPKLLGLLFPLLARERHDRVRDNICGALARLLMASPTRKPEPQVLAALLHALPLKEDLEEWVTIGRLFSFLYQSSPDQVIDVAPELLRICSLILADNKIPPDTKAALLLLLTFLAKQHTDSFQAALGSLPVDKAQELQAVLGLS.

Met1 bears the N-acetylmethionine mark. Residues 24–90 form the Importin N-terminal domain; that stretch reads ATEQLQIVLR…KSLILTALQR (67 aa). 6 HEAT repeats span residues 348–385, 390–427, 431–471, 475–513, 895–932, and 936–974; these read KLCP…GAGD, RLLP…NLQP, SYSR…NLGP, PYLP…AAQA, QFVS…HGGH, and EHFP…ASPT.

Belongs to the importin beta family. As to quaternary structure, found in a cytosolic complex with ASF1 (ASF1A or ASF1B) and histones H3 and H4.

Its subcellular location is the cytoplasm. The protein resides in the nucleus. Nuclear transport receptor that mediates nuclear import of proteins, such as histones, RPS3A, TNP2 and VDR. Serves as receptor for nuclear localization signals (NLS) in cargo substrates. Is thought to mediate docking of the importin/substrate complex to the nuclear pore complex (NPC) through binding to nucleoporin and the complex is subsequently translocated through the pore by an energy requiring, Ran-dependent mechanism. At the nucleoplasmic side of the NPC, Ran binds to the importin, the importin/substrate complex dissociates and importin is re-exported from the nucleus to the cytoplasm where GTP hydrolysis releases Ran. The directionality of nuclear import is thought to be conferred by an asymmetric distribution of the GTP- and GDP-bound forms of Ran between the cytoplasm and nucleus. Mediates the nuclear import of the histone H3-H4 dimer when in complex with ASF1 (ASF1A or ASF1B). Mediates the ligand-independent nuclear import of vitamin D receptor (VDR). In vitro, mediates the nuclear import of human cytomegalovirus UL84 by recognizing a non-classical NLS. This chain is Importin-4 (IPO4), found in Homo sapiens (Human).